A 351-amino-acid chain; its full sequence is Ferredoxin--NADP reductase (351 aa).

7 residues coordinate FAD: Asp-44, Gln-52, Tyr-57, Ile-97, Phe-132, Asp-296, and Ser-337.

This sequence belongs to the ferredoxin--NADP reductase type 2 family. As to quaternary structure, homodimer. Requires FAD as cofactor.

The enzyme catalyses 2 reduced [2Fe-2S]-[ferredoxin] + NADP(+) + H(+) = 2 oxidized [2Fe-2S]-[ferredoxin] + NADPH. In Burkholderia vietnamiensis (strain G4 / LMG 22486) (Burkholderia cepacia (strain R1808)), this protein is Ferredoxin--NADP reductase.